A 355-amino-acid chain; its full sequence is Guanine nucleotide-binding protein alpha-12 subunit (355 aa).

One can recognise a G-alpha domain in the interval 28 to 355 (RQINLLLLGS…EQNLKTLMMQ (328 aa)). Positions 31–44 (NLLLLGSGESGKST) are G1 motif. GTP-binding positions include 36–43 (GSGESGKS), 176–182 (LFCRKAT), 201–205 (DVGGQ), 270–273 (NKND), and A327. 2 residues coordinate Mg(2+): S43 and T182. The interval 174–182 (DILFCRKAT) is G2 motif. The segment at 197–206 (FRFIDVGGQR) is G3 motif. The G4 motif stretch occupies residues 266-273 (ILFMNKND). The interval 325–330 (TTAVDT) is G5 motif.

Belongs to the G-alpha family. In terms of assembly, g proteins are composed of 3 units; alpha, beta and gamma. The alpha chain contains the guanine nucleotide binding site.

In terms of biological role, guanine nucleotide-binding proteins (G proteins) are involved as modulators or transducers in various transmembrane signaling systems. May play a role in resistance to fungal infection in the epidermis by regulating the up-regulation of several antimicrobial peptides of the NLP and CNC families. Upstream of plc-3, egl-8, tpa-1 and the p38-like pathway, required for the expression of antimicrobial peptide nlp-29 in the epidermis in response to fungal infection or physical injury. In Caenorhabditis briggsae, this protein is Guanine nucleotide-binding protein alpha-12 subunit (gpa-12).